The primary structure comprises 292 residues: Phosphatidylserine decarboxylase proenzyme (292 aa).

Catalysis depends on charge relay system; for autoendoproteolytic cleavage activity residues D92, H149, and S255. S255 functions as the Schiff-base intermediate with substrate; via pyruvic acid; for decarboxylase activity in the catalytic mechanism. The residue at position 255 (S255) is a Pyruvic acid (Ser); by autocatalysis.

It belongs to the phosphatidylserine decarboxylase family. PSD-B subfamily. Prokaryotic type I sub-subfamily. In terms of assembly, heterodimer of a large membrane-associated beta subunit and a small pyruvoyl-containing alpha subunit. Pyruvate is required as a cofactor. Is synthesized initially as an inactive proenzyme. Formation of the active enzyme involves a self-maturation process in which the active site pyruvoyl group is generated from an internal serine residue via an autocatalytic post-translational modification. Two non-identical subunits are generated from the proenzyme in this reaction, and the pyruvate is formed at the N-terminus of the alpha chain, which is derived from the carboxyl end of the proenzyme. The autoendoproteolytic cleavage occurs by a canonical serine protease mechanism, in which the side chain hydroxyl group of the serine supplies its oxygen atom to form the C-terminus of the beta chain, while the remainder of the serine residue undergoes an oxidative deamination to produce ammonia and the pyruvoyl prosthetic group on the alpha chain. During this reaction, the Ser that is part of the protease active site of the proenzyme becomes the pyruvoyl prosthetic group, which constitutes an essential element of the active site of the mature decarboxylase.

The protein localises to the cell membrane. The catalysed reaction is a 1,2-diacyl-sn-glycero-3-phospho-L-serine + H(+) = a 1,2-diacyl-sn-glycero-3-phosphoethanolamine + CO2. It participates in phospholipid metabolism; phosphatidylethanolamine biosynthesis; phosphatidylethanolamine from CDP-diacylglycerol: step 2/2. In terms of biological role, catalyzes the formation of phosphatidylethanolamine (PtdEtn) from phosphatidylserine (PtdSer). This Idiomarina loihiensis (strain ATCC BAA-735 / DSM 15497 / L2-TR) protein is Phosphatidylserine decarboxylase proenzyme.